We begin with the raw amino-acid sequence, 1161 residues long: Cell wall protein DAN4 (1161 aa).

Residues 1-19 (MVNISIVAGIVALATSAAA) form the signal peptide. Disordered regions lie at residues 123-309 (TSTS…SASS), 326-345 (TPATSTASTDHTTSSVSTTN), 354-547 (TTTS…SSFG), and 691-713 (STDSVSPNIPFSEISSSPESSTA). A 46 X 3 AA tandem repeats of T-[SP]-T region spans residues 134–286 (TSTTPTTTIT…TTSTTSTTST (153 aa)). Positions 354-372 (TTTSDTYISSSSPSQVTSS) are enriched in low complexity. 14 tandem repeats follow at residues 373–384 (AEPTTVSEVTSS), 385–396 (VEPTRSSQVTSS), 397–408 (AEPTTVSEFTSS), 409–420 (VEPTRSSQVTSS), 421–432 (AEPTTVSEFTSS), 433–444 (VEPTRSSQVTSS), 445–456 (AEPTTVSEFTSS), 457–468 (VEPTRSSQVTSS), 469–480 (AEPTTVSEFTSS), 481–492 (VEPTRSSQVTSS), 493–504 (AEPTTVSEFTSS), 505–516 (VEPIRSSQVTSS), 517–528 (AEPTTVSEVTSS), and 529–540 (VEPIRSSQVTTT). Residues 373-540 (AEPTTVSEVT…PIRSSQVTTT (168 aa)) are 14 X 12 AA approximate tandem repeats. Over residues 373–547 (AEPTTVSEVT…TTTEPVSSFG (175 aa)) the composition is skewed to polar residues. Tandem repeats lie at residues 826–913 (EDSV…EDNE) and 914–1001 (EDIT…EDNE). The 2.5 X 88 AA approximate tandem repeats stretch occupies residues 826–1040 (EDSVLTKTQV…SPVSSFNSKA (215 aa)). A 2-3; truncated repeat occupies 1002–1040 (EDVASTKTELLTMETTITSCSGGICTTLMSPVSSFNSKA). Asn1137 carries the GPI-anchor amidated asparagine lipid modification. Positions 1138–1161 (GAYNFDKDNIFGTAIVAVVALLLL) are cleaved as a propeptide — removed in mature form.

It belongs to the SRP1/TIP1 family. In terms of processing, extensively O-glycosylated. The GPI-anchor is attached to the protein in the endoplasmic reticulum and serves to target the protein to the cell surface. There, the glucosamine-inositol phospholipid moiety is cleaved off and the GPI-modified mannoprotein is covalently attached via its lipidless GPI glycan remnant to the 1,6-beta-glucan of the outer cell wall layer.

The protein resides in the secreted. It is found in the cell wall. Its subcellular location is the cell membrane. Functionally, component of the cell wall. The protein is Cell wall protein DAN4 of Saccharomyces cerevisiae (strain ATCC 204508 / S288c) (Baker's yeast).